The chain runs to 732 residues: 1,4-alpha-glucan branching enzyme GlgB (732 aa).

Asp412 serves as the catalytic Nucleophile. The Proton donor role is filled by Glu465.

It belongs to the glycosyl hydrolase 13 family. GlgB subfamily. As to quaternary structure, monomer.

The enzyme catalyses Transfers a segment of a (1-&gt;4)-alpha-D-glucan chain to a primary hydroxy group in a similar glucan chain.. Its pathway is glycan biosynthesis; glycogen biosynthesis. Its function is as follows. Catalyzes the formation of the alpha-1,6-glucosidic linkages in glycogen by scission of a 1,4-alpha-linked oligosaccharide from growing alpha-1,4-glucan chains and the subsequent attachment of the oligosaccharide to the alpha-1,6 position. This Pseudomonas aeruginosa (strain ATCC 15692 / DSM 22644 / CIP 104116 / JCM 14847 / LMG 12228 / 1C / PRS 101 / PAO1) protein is 1,4-alpha-glucan branching enzyme GlgB.